The following is a 274-amino-acid chain: Large ribosomal subunit protein uL2 (274 aa).

Disordered regions lie at residues 28–53 and 221–274; these read KPYA…TTRH and RGTA…RTKK. Residues 39–48 are compositionally biased toward low complexity; it reads KSGGRNNNGR. Basic residues predominate over residues 253–274; sequence KGKKTRKNKRTEHFIVHRRTKK.

The protein belongs to the universal ribosomal protein uL2 family. As to quaternary structure, part of the 50S ribosomal subunit. Forms a bridge to the 30S subunit in the 70S ribosome.

One of the primary rRNA binding proteins. Required for association of the 30S and 50S subunits to form the 70S ribosome, for tRNA binding and peptide bond formation. It has been suggested to have peptidyltransferase activity; this is somewhat controversial. Makes several contacts with the 16S rRNA in the 70S ribosome. This chain is Large ribosomal subunit protein uL2, found in Proteus mirabilis (strain HI4320).